The chain runs to 788 residues: Bifunctional purine biosynthetic protein ADE1 (788 aa).

The interval 1-430 (MEPIIALLIG…DIAHHALNPK (430 aa)) is GARS. The region spanning 115-321 (KDFMHRNNIP…LAEIILACVN (207 aa)) is the ATP-grasp domain. ATP is bound at residue 141–202 (LDTCTFDVVI…EELLEGEELS (62 aa)). Mg(2+) is bound by residues glutamate 291 and asparagine 293. Residues 437-769 (LTYENSGVSV…TVYRIGQLVD (333 aa)) form an AIRS region.

In the N-terminal section; belongs to the GARS family. The protein in the C-terminal section; belongs to the AIR synthase family. Requires Mg(2+) as cofactor. Mn(2+) is required as a cofactor.

The protein resides in the cytoplasm. It localises to the cytosol. The enzyme catalyses 5-phospho-beta-D-ribosylamine + glycine + ATP = N(1)-(5-phospho-beta-D-ribosyl)glycinamide + ADP + phosphate + H(+). It carries out the reaction 2-formamido-N(1)-(5-O-phospho-beta-D-ribosyl)acetamidine + ATP = 5-amino-1-(5-phospho-beta-D-ribosyl)imidazole + ADP + phosphate + H(+). Its pathway is purine metabolism; IMP biosynthesis via de novo pathway; 5-amino-1-(5-phospho-D-ribosyl)imidazole from N(2)-formyl-N(1)-(5-phospho-D-ribosyl)glycinamide: step 2/2. The protein operates within purine metabolism; IMP biosynthesis via de novo pathway; N(1)-(5-phospho-D-ribosyl)glycinamide from 5-phospho-alpha-D-ribose 1-diphosphate: step 2/2. Its function is as follows. Catalyzes the second and fifth step in the 'de novo' purine biosynthesis pathway; contains phosphoribosylamine--glycine ligase (GARS) and phosphoribosylformylglycinamidine cyclo-ligase (AIRS) activities. The sequence is that of Bifunctional purine biosynthetic protein ADE1 from Schizosaccharomyces pombe (strain 972 / ATCC 24843) (Fission yeast).